Reading from the N-terminus, the 336-residue chain is MSRVTLSRYLIEQTRSNNTPADLRFLIEVVARACKEISHAVSKGALGGVLGSMGTENVQGEVQKKLDVISNEILLEANEWGGHLAGMASEEMDNAYQIPGKYPKGAYLLVFDPLDGSSNIDINAPVGTIFSVLRCPNEYLSQNEALNEKAFLQPGTEQVAAGYAIYGPQTMLVLTLGDGVKGFTLDREMGSFVLTHEDITIPASTQEFAINMSNQRHWEEPVTRYVGELMAGEEGPLKKNFNMRWVAAMVADVHRILTRGGLFMYPRDSREPSKPGKLRLMYEANPMSFLVEQAGGASTDGHQRILDIQPEGLHQRVAVFLGSKEEVERVTAYHKK.

Mg(2+) is bound by residues glutamate 90, aspartate 112, leucine 114, and aspartate 115. Residues 115-118 (DGSS), asparagine 211, and lysine 277 contribute to the substrate site. Position 283 (glutamate 283) interacts with Mg(2+).

Belongs to the FBPase class 1 family. As to quaternary structure, homotetramer. Requires Mg(2+) as cofactor.

The protein resides in the cytoplasm. It catalyses the reaction beta-D-fructose 1,6-bisphosphate + H2O = beta-D-fructose 6-phosphate + phosphate. It participates in carbohydrate biosynthesis; gluconeogenesis. The sequence is that of Fructose-1,6-bisphosphatase class 1 from Pseudomonas fluorescens (strain SBW25).